Here is a 169-residue protein sequence, read N- to C-terminus: Ribosome maturation factor RimM (169 aa).

One can recognise a PRC barrel domain in the interval 97 to 169; sequence EDEVYFKDLI…KIVVDWEYDY (73 aa).

The protein belongs to the RimM family. Binds ribosomal protein uS19.

It is found in the cytoplasm. An accessory protein needed during the final step in the assembly of 30S ribosomal subunit, possibly for assembly of the head region. Essential for efficient processing of 16S rRNA. May be needed both before and after RbfA during the maturation of 16S rRNA. It has affinity for free ribosomal 30S subunits but not for 70S ribosomes. In Francisella tularensis subsp. tularensis (strain WY96-3418), this protein is Ribosome maturation factor RimM.